Here is a 267-residue protein sequence, read N- to C-terminus: 3-methyl-2-oxobutanoate hydroxymethyltransferase (267 aa).

Residues D46 and D85 each coordinate Mg(2+). 3-methyl-2-oxobutanoate is bound by residues 46 to 47 (DS), D85, and K115. Residue E117 coordinates Mg(2+). E184 acts as the Proton acceptor in catalysis.

It belongs to the PanB family. In terms of assembly, homodecamer; pentamer of dimers. It depends on Mg(2+) as a cofactor.

The protein resides in the cytoplasm. It carries out the reaction 3-methyl-2-oxobutanoate + (6R)-5,10-methylene-5,6,7,8-tetrahydrofolate + H2O = 2-dehydropantoate + (6S)-5,6,7,8-tetrahydrofolate. The protein operates within cofactor biosynthesis; (R)-pantothenate biosynthesis; (R)-pantoate from 3-methyl-2-oxobutanoate: step 1/2. In terms of biological role, catalyzes the reversible reaction in which hydroxymethyl group from 5,10-methylenetetrahydrofolate is transferred onto alpha-ketoisovalerate to form ketopantoate. The chain is 3-methyl-2-oxobutanoate hydroxymethyltransferase from Geobacter metallireducens (strain ATCC 53774 / DSM 7210 / GS-15).